The sequence spans 190 residues: RNA-binding protein OPG065 (190 aa).

One can recognise a Z-binding domain in the interval 5–70; it reads YIDERSDAEI…DIPPRWFMTT (66 aa). The DRBM domain maps to 117-184; sequence NPVTIINEYC…AKLAVDKLLG (68 aa).

The protein belongs to the orthopoxvirus OPG065 family. In terms of assembly, interacts with host G1P2/ISG15. Interacts with host EIF2AK2/PKR. Interacts with host ZBP1.

RNA-binding protein that plays a role in the inhibition of multiple cellular antiviral responses activated by double-stranded RNA (dsRNA), such as inhibition of PKR activation, necroptosis, and IFN-mediated antiviral activities. Recognizes and binds Z-RNA structures via its Z-binding domain and dsRNA via its DRBM domain: RNA-binding activity is required to escape host ZBP1-dependent necroptosis. Mechanistically, the Z-binding domain binds Z-RNAs that are produced during vaccinia virus infection, thereby competing with Z-RNA detection by host ZBP1, suppressing ZBP1-dependent necroptosis. Acts as a key inhibitor of the interferon response by blocking the phosphorylation and subsequent activation of IRF3 and IRF7 kinases that are required for interferon-alpha gene expression. Inhibits NF-kappa-B activation and the ubiquitin-like protein ISG15, which is an early antiviral protein. The binding with host ISG15 subsequently blocks host ISGylation. In Homo sapiens (Human), this protein is RNA-binding protein OPG065 (OPG065).